Reading from the N-terminus, the 364-residue chain is Coproporphyrin III ferrochelatase (364 aa).

Fe-coproporphyrin III is bound by residues R29 and Y118. Fe(2+) contacts are provided by H169 and E250.

Belongs to the ferrochelatase family.

It localises to the cytoplasm. It carries out the reaction Fe-coproporphyrin III + 2 H(+) = coproporphyrin III + Fe(2+). The protein operates within porphyrin-containing compound metabolism; protoheme biosynthesis. Functionally, involved in coproporphyrin-dependent heme b biosynthesis. Catalyzes the insertion of ferrous iron into coproporphyrin III to form Fe-coproporphyrin III. This Streptococcus pneumoniae serotype 4 (strain ATCC BAA-334 / TIGR4) protein is Coproporphyrin III ferrochelatase.